The primary structure comprises 362 residues: S-adenosylmethionine:tRNA ribosyltransferase-isomerase (362 aa).

It belongs to the QueA family. In terms of assembly, monomer.

The protein localises to the cytoplasm. It carries out the reaction 7-aminomethyl-7-carbaguanosine(34) in tRNA + S-adenosyl-L-methionine = epoxyqueuosine(34) in tRNA + adenine + L-methionine + 2 H(+). It participates in tRNA modification; tRNA-queuosine biosynthesis. Functionally, transfers and isomerizes the ribose moiety from AdoMet to the 7-aminomethyl group of 7-deazaguanine (preQ1-tRNA) to give epoxyqueuosine (oQ-tRNA). The sequence is that of S-adenosylmethionine:tRNA ribosyltransferase-isomerase from Deinococcus radiodurans (strain ATCC 13939 / DSM 20539 / JCM 16871 / CCUG 27074 / LMG 4051 / NBRC 15346 / NCIMB 9279 / VKM B-1422 / R1).